A 150-amino-acid polypeptide reads, in one-letter code: Putative TBC1 domain family member 29 (150 aa).

Residues 1-43 (MGHLDKEGLCTQGSSFSWLLRVLNDGISLGLTPCLWDMYLLEG) enclose the Rab-GAP TBC; truncated domain. Positions 102-111 (ESSRGPSLLQ) are enriched in polar residues. The segment at 102-125 (ESSRGPSLLQTPPRVPGQQALSRG) is disordered.

The sequence is that of Putative TBC1 domain family member 29 from Homo sapiens (Human).